The chain runs to 81 residues: Photosystem I iron-sulfur center (81 aa).

4Fe-4S ferredoxin-type domains lie at Ser2–Trp31 and Ile39–Tyr68. [4Fe-4S] cluster-binding residues include Cys11, Cys14, Cys17, Cys21, Cys48, Cys51, Cys54, and Cys58.

As to quaternary structure, the cyanobacterial PSI reaction center is composed of one copy each of PsaA,B,C,D,E,F,I,J,K,L,M and X, and forms trimeric complexes. The cofactor is [4Fe-4S] cluster.

It is found in the cellular thylakoid membrane. The catalysed reaction is reduced [plastocyanin] + hnu + oxidized [2Fe-2S]-[ferredoxin] = oxidized [plastocyanin] + reduced [2Fe-2S]-[ferredoxin]. Its function is as follows. Apoprotein for the two 4Fe-4S centers FA and FB of photosystem I (PSI); essential for photochemical activity. FB is the terminal electron acceptor of PSI, donating electrons to ferredoxin. The C-terminus interacts with PsaA/B/D and helps assemble the protein into the PSI complex. Required for binding of PsaD and PsaE to PSI. PSI is a plastocyanin/cytochrome c6-ferredoxin oxidoreductase, converting photonic excitation into a charge separation, which transfers an electron from the donor P700 chlorophyll pair to the spectroscopically characterized acceptors A0, A1, FX, FA and FB in turn. This Prochlorococcus marinus (strain MIT 9313) protein is Photosystem I iron-sulfur center.